A 488-amino-acid polypeptide reads, in one-letter code: ATP synthase subunit beta (488 aa).

164 to 171 (GGAGVGKT) contributes to the ATP binding site.

This sequence belongs to the ATPase alpha/beta chains family. F-type ATPases have 2 components, CF(1) - the catalytic core - and CF(0) - the membrane proton channel. CF(1) has five subunits: alpha(3), beta(3), gamma(1), delta(1), epsilon(1). CF(0) has four main subunits: a(1), b(1), b'(1) and c(9-12).

The protein localises to the cellular thylakoid membrane. It carries out the reaction ATP + H2O + 4 H(+)(in) = ADP + phosphate + 5 H(+)(out). Functionally, produces ATP from ADP in the presence of a proton gradient across the membrane. The catalytic sites are hosted primarily by the beta subunits. This Prochlorococcus marinus (strain MIT 9303) protein is ATP synthase subunit beta.